Reading from the N-terminus, the 267-residue chain is 2-keto-3-deoxy-L-rhamnonate aldolase (267 aa).

Catalysis depends on H49, which acts as the Proton acceptor. Position 151 (Q151) interacts with substrate. E153 serves as a coordination point for Mg(2+). 2 residues coordinate substrate: A178 and D179. Mg(2+) is bound at residue D179.

It belongs to the HpcH/HpaI aldolase family. KDR aldolase subfamily. In terms of assembly, homohexamer. Requires Mg(2+) as cofactor.

It carries out the reaction 2-dehydro-3-deoxy-L-rhamnonate = (S)-lactaldehyde + pyruvate. In terms of biological role, catalyzes the reversible retro-aldol cleavage of 2-keto-3-deoxy-L-rhamnonate (KDR) to pyruvate and lactaldehyde. The chain is 2-keto-3-deoxy-L-rhamnonate aldolase from Shigella dysenteriae serotype 1 (strain Sd197).